Consider the following 156-residue polypeptide: Xanthocillin biosynthesis cluster protein D (156 aa).

Residues N107 and N120 are each glycosylated (N-linked (GlcNAc...) asparagine). The chain crosses the membrane as a helical span at residues 131 to 153 (IHLNAIALVATVWYGFTLSSSLL).

It is found in the membrane. It functions in the pathway secondary metabolite biosynthesis. Part of the gene cluster that mediates the biosynthesis of the isocyanide xanthocillin and its derivatives. The first step of the pathway consists in the conversion of tyrosine into a vinyl-isonitrile intermediate by the isocyanide synthase xanB. Subsequent oxidative dimerization of this intermediate to form xanthocillin may involve the cytochrome P450 monooxygenase xanG, whose expression is coregulated with that of XanB. Xanthocillin can be further modified by the isonitrile hydratase-like protein xanA which introduces N-formyl groups and the methyltransferase xanE which introduces methyl groups, leading to the production of several derivatives including fumiformamide. Finally, fumiformamide can be subject to both oxidative and reductive cyclization to yield melanocins E and F, respectively. This is Xanthocillin biosynthesis cluster protein D from Aspergillus fumigatus (strain ATCC MYA-4609 / CBS 101355 / FGSC A1100 / Af293) (Neosartorya fumigata).